The sequence spans 259 residues: MSQIHPTALISPSATIDKTATIGPYCIVGDEVTIGAHTVLHRHVVVTRLTRIGEYNQFYQFSSIGEDPQDLKYAGERTWLEIGDHNTIREACSLHRGTEQDGGLTKIGNHNLLMVNTHVAHDCLIGDHNVLANNVGVAGHVTIGNHIIVGGNSGIHQFCTIDDYSLVGGATLVLKDVAAFTMVSGNPAKAHGLNIEGMRRKGWSKDSIDVLRQAYRVVFRSGLTTVQALEVLKQDLLPKESKIEFLIDSLQKSRRGVVR.

Belongs to the transferase hexapeptide repeat family. LpxA subfamily. Homotrimer.

The protein resides in the cytoplasm. The enzyme catalyses a (3R)-hydroxyacyl-[ACP] + UDP-N-acetyl-alpha-D-glucosamine = a UDP-3-O-[(3R)-3-hydroxyacyl]-N-acetyl-alpha-D-glucosamine + holo-[ACP]. It functions in the pathway glycolipid biosynthesis; lipid IV(A) biosynthesis; lipid IV(A) from (3R)-3-hydroxytetradecanoyl-[acyl-carrier-protein] and UDP-N-acetyl-alpha-D-glucosamine: step 1/6. In terms of biological role, involved in the biosynthesis of lipid A, a phosphorylated glycolipid that anchors the lipopolysaccharide to the outer membrane of the cell. The chain is Acyl-[acyl-carrier-protein]--UDP-N-acetylglucosamine O-acyltransferase from Psychrobacter cryohalolentis (strain ATCC BAA-1226 / DSM 17306 / VKM B-2378 / K5).